Consider the following 54-residue polypeptide: Large ribosomal subunit protein bL33C (54 aa).

The protein belongs to the bacterial ribosomal protein bL33 family.

The chain is Large ribosomal subunit protein bL33C (rpmG3) from Streptomyces coelicolor (strain ATCC BAA-471 / A3(2) / M145).